We begin with the raw amino-acid sequence, 165 residues long: NAD(P)H-quinone oxidoreductase subunit I, chloroplastic (165 aa).

4Fe-4S ferredoxin-type domains are found at residues 55–84 (GRIHFEFDKCIACEVCVRVCPINLPVVDWE) and 95–124 (KSYSIDFGVCIFCGNCVEYCPTNCLSMTEE). [4Fe-4S] cluster is bound by residues C64, C67, C70, C74, C104, C107, C110, and C114.

The protein belongs to the complex I 23 kDa subunit family. As to quaternary structure, NDH is composed of at least 16 different subunits, 5 of which are encoded in the nucleus. [4Fe-4S] cluster is required as a cofactor.

It localises to the plastid. The protein resides in the chloroplast thylakoid membrane. The catalysed reaction is a plastoquinone + NADH + (n+1) H(+)(in) = a plastoquinol + NAD(+) + n H(+)(out). It catalyses the reaction a plastoquinone + NADPH + (n+1) H(+)(in) = a plastoquinol + NADP(+) + n H(+)(out). In terms of biological role, NDH shuttles electrons from NAD(P)H:plastoquinone, via FMN and iron-sulfur (Fe-S) centers, to quinones in the photosynthetic chain and possibly in a chloroplast respiratory chain. The immediate electron acceptor for the enzyme in this species is believed to be plastoquinone. Couples the redox reaction to proton translocation, and thus conserves the redox energy in a proton gradient. The protein is NAD(P)H-quinone oxidoreductase subunit I, chloroplastic of Psilotum nudum (Whisk fern).